The following is a 253-amino-acid chain: Pre-mRNA-splicing factor SPF27 homolog (253 aa).

A coiled-coil region spans residues 124-235; that stretch reads KQYLQKNQRS…IDSFKKEAAE (112 aa).

This sequence belongs to the SPF27 family. Component of the multiprotein assembly MOS4-associated complex (MAC) at least composed of MOS4, CDC5 and PRL1. Interacts with CYCL1-1 and CDC5. Associated with the spliceosome. Interacts with ENY2.

Its subcellular location is the nucleus. In terms of biological role, component of the MAC complex that probably regulates defense responses through transcriptional control and thereby is essential for plant innate immunity. Involved in mRNA splicing. This Arabidopsis thaliana (Mouse-ear cress) protein is Pre-mRNA-splicing factor SPF27 homolog (MOS4).